We begin with the raw amino-acid sequence, 269 residues long: Gem-associated protein 2 (269 aa).

Residues Ser-70 and Ser-155 each carry the phosphoserine modification.

It belongs to the gemin-2 family. As to quaternary structure, monomer. Part of the core SMN complex that contains SMN1, GEMIN2/SIP1, DDX20/GEMIN3, GEMIN4, GEMIN5, GEMIN6, GEMIN7, GEMIN8 and STRAP/UNRIP. Part of the SMN-Sm complex that contains SMN1, GEMIN2/SIP1, DDX20/GEMIN3, GEMIN4, GEMIN5, GEMIN6, GEMIN7, GEMIN8, STRAP/UNRIP and the Sm proteins SNRPB, SNRPD1, SNRPD2, SNRPD3, SNRPE, SNRPF and SNRPG. Interacts with GEMIN5; the interaction is direct. Interacts (via C-terminus) with SMN1; the interaction is direct. Interacts with SNRPD1; the interaction is direct. Interacts with SNRPD2; the interaction is direct. Interacts (via N-terminus) with SNRPF; the interaction is direct. Interacts (via N-terminus) with SNRPE; the interaction is direct. Interacts (via N-terminus) with SNRPG; the interaction is direct.

The protein resides in the nucleus. Its subcellular location is the gem. It localises to the cytoplasm. Functionally, the SMN complex catalyzes the assembly of small nuclear ribonucleoproteins (snRNPs), the building blocks of the spliceosome, and thereby plays an important role in the splicing of cellular pre-mRNAs. Most spliceosomal snRNPs contain a common set of Sm proteins SNRPB, SNRPD1, SNRPD2, SNRPD3, SNRPE, SNRPF and SNRPG that assemble in a heptameric protein ring on the Sm site of the small nuclear RNA to form the core snRNP (Sm core). In the cytosol, the Sm proteins SNRPD1, SNRPD2, SNRPE, SNRPF and SNRPG (5Sm) are trapped in an inactive 6S pICln-Sm complex by the chaperone CLNS1A that controls the assembly of the core snRNP. To assemble core snRNPs, the SMN complex accepts the trapped 5Sm proteins from CLNS1A. Binding of snRNA inside 5Sm ultimately triggers eviction of the SMN complex, thereby allowing binding of SNRPD3 and SNRPB to complete assembly of the core snRNP. Within the SMN complex, GEMIN2 constrains the conformation of 5Sm, thereby promoting 5Sm binding to snRNA containing the snRNP code (a nonameric Sm site and a 3'-adjacent stem-loop), thus preventing progression of assembly until a cognate substrate is bound. This Mus musculus (Mouse) protein is Gem-associated protein 2.